A 180-amino-acid polypeptide reads, in one-letter code: UPF0227 protein YcfP (180 aa).

It belongs to the UPF0227 family.

The protein is UPF0227 protein YcfP of Salmonella choleraesuis (strain SC-B67).